Here is a 587-residue protein sequence, read N- to C-terminus: 65-kDa microtubule-associated protein 1 (587 aa).

5 coiled-coil regions span residues 46-84 (QECLDVYKRKVEQAAKSRAELLQTLSDANAELSSLTMSL), 151-181 (DESDLSLKKLDDFQSQLQELQKEKSDRLRKV), 234-257 (LTLKDDKKQRLQKLQELATQLIDL), 290-317 (ALARDLIEQAEVEVDRLDQLKASRMKEI), and 461-489 (AMLDEYGMLRQEREEEKRRLREQKKVQEQ). A compositionally biased stretch (basic and acidic residues) spans 474–494 (EEEKRRLREQKKVQEQPHVEQ). The segment at 474–587 (EEEKRRLREQ…AADHQVPASP (114 aa)) is disordered. Residue Ser503 is modified to Phosphoserine. The residue at position 526 (Thr526) is a Phosphothreonine. The segment covering 531-542 (LSLNANQNGSRS) has biased composition (polar residues). 2 positions are modified to phosphoserine: Ser532 and Ser540. Phosphothreonine occurs at positions 543 and 552. A compositionally biased stretch (basic and acidic residues) spans 543-553 (TAKEAGRRETL). Ser573, Ser576, and Ser586 each carry phosphoserine.

Belongs to the MAP65/ASE1 family. In terms of assembly, forms dimer. Binds to MT, mostly with coaligned MT, both between parallel or antiparallel, forming thick bundles. Interacts with the alpha-tubulin subunit of the tubulin heterodimer. Bundles polymerized MT via the formation of 25-nm crossbridges at specific stages of the cell cycle (e.g. bundles microtubules in interphase, anaphase and telophase but does not bind microtubules in prophase or metaphase), at the plus-end, the minus-end, or along the entire length of MT, and along phragmoplast MT. Interacts with SH3P1 and MPK4. Basal phosphorylation at all stages of the cell cycle. MT-binding properties inhibited by hyperphosphorylation mediated by CDKs and/or MAPKs (e.g. ANP2, ANP3, MPK4 and MPK6) during prometaphase and metaphase. As to expression, expressed in all organs and tissues with the exception of sepals and anthers. Bound to subsets of microtubules in the cells of root epidermis, hypocotyl and cotyledons (at protein level).

It is found in the nucleus. The protein localises to the cytoplasm. It localises to the cytoskeleton. Its subcellular location is the spindle. The protein resides in the phragmoplast. It is found in the cell cortex. Functionally, microtubule-associated protein that bundle and stabilize adjacent microtubules (MT) of the cell cortex. Enhances MT nucleation. Can also bind to tubulin dimers and promotes their polymerization. Confers MT resistance to the drug propyzamide and cold conditions. Plays a role in the central spindle at anaphase to early cytokinesis but is not essential at the midline of the phragmoplast at later stages. Represses metaphase spindle organization and the transition to anaphase in dephosphorylated active form. Promotes the formation of a planar network of antiparallel microtubules. May be involved in stomatal movement modulation by regulating the dynamic and arrangement of cortical MT. The chain is 65-kDa microtubule-associated protein 1 (MAP65-1) from Arabidopsis thaliana (Mouse-ear cress).